An 897-amino-acid polypeptide reads, in one-letter code: Isoleucine--tRNA ligase (897 aa).

The 'HIGH' region motif lies at 59–69 (PYANGDIHVGH). Residue Glu-553 participates in L-isoleucyl-5'-AMP binding. The short motif at 594–598 (KMSKS) is the 'KMSKS' region element. An ATP-binding site is contributed by Lys-597. 4 residues coordinate Zn(2+): Cys-866, Cys-869, Cys-883, and Cys-886.

Belongs to the class-I aminoacyl-tRNA synthetase family. IleS type 1 subfamily. In terms of assembly, monomer. Zn(2+) serves as cofactor.

It localises to the cytoplasm. It catalyses the reaction tRNA(Ile) + L-isoleucine + ATP = L-isoleucyl-tRNA(Ile) + AMP + diphosphate. In terms of biological role, catalyzes the attachment of isoleucine to tRNA(Ile). As IleRS can inadvertently accommodate and process structurally similar amino acids such as valine, to avoid such errors it has two additional distinct tRNA(Ile)-dependent editing activities. One activity is designated as 'pretransfer' editing and involves the hydrolysis of activated Val-AMP. The other activity is designated 'posttransfer' editing and involves deacylation of mischarged Val-tRNA(Ile). In Mycoplasmopsis synoviae (strain 53) (Mycoplasma synoviae), this protein is Isoleucine--tRNA ligase.